The following is a 504-amino-acid chain: Maturase K (504 aa).

It belongs to the intron maturase 2 family. MatK subfamily.

The protein resides in the plastid. Its subcellular location is the chloroplast. In terms of biological role, usually encoded in the trnK tRNA gene intron. Probably assists in splicing its own and other chloroplast group II introns. The sequence is that of Maturase K from Turritis glabra (Tower mustard).